The sequence spans 401 residues: UDP-GlcNAc:betaGal beta-1,3-N-acetylglucosaminyltransferase 9 (401 aa).

Topologically, residues 1–10 are cytoplasmic; it reads MRRRLRLRRE. A helical; Signal-anchor for type II membrane protein transmembrane segment spans residues 11 to 31; sequence ALLTLLLGATLGLLLYAQQEG. Residues 32–401 are Lumenal-facing; the sequence is AAPTTSAPRA…VPAGPFQWGP (370 aa). The segment at 33–85 is disordered; that stretch reads APTTSAPRAQGRAAPGPTPGLRVFQAPDTGAAPPAYEGDTPEPPTPTGPFDFG. Positions 38 to 47 are enriched in low complexity; that stretch reads APRAQGRAAP.

The protein belongs to the glycosyltransferase 31 family.

The protein localises to the golgi apparatus membrane. The chain is UDP-GlcNAc:betaGal beta-1,3-N-acetylglucosaminyltransferase 9 from Bos taurus (Bovine).